Here is a 145-residue protein sequence, read N- to C-terminus: D-aminoacyl-tRNA deacylase (145 aa).

Residues G137–P138 carry the Gly-cisPro motif, important for rejection of L-amino acids motif.

Belongs to the DTD family. In terms of assembly, homodimer.

The protein localises to the cytoplasm. It carries out the reaction glycyl-tRNA(Ala) + H2O = tRNA(Ala) + glycine + H(+). The catalysed reaction is a D-aminoacyl-tRNA + H2O = a tRNA + a D-alpha-amino acid + H(+). An aminoacyl-tRNA editing enzyme that deacylates mischarged D-aminoacyl-tRNAs. Also deacylates mischarged glycyl-tRNA(Ala), protecting cells against glycine mischarging by AlaRS. Acts via tRNA-based rather than protein-based catalysis; rejects L-amino acids rather than detecting D-amino acids in the active site. By recycling D-aminoacyl-tRNA to D-amino acids and free tRNA molecules, this enzyme counteracts the toxicity associated with the formation of D-aminoacyl-tRNA entities in vivo and helps enforce protein L-homochirality. This chain is D-aminoacyl-tRNA deacylase, found in Pseudomonas fluorescens (strain ATCC BAA-477 / NRRL B-23932 / Pf-5).